The sequence spans 530 residues: Glutamate--cysteine ligase (530 aa).

This sequence belongs to the glutamate--cysteine ligase type 1 family. Type 1 subfamily.

The catalysed reaction is L-cysteine + L-glutamate + ATP = gamma-L-glutamyl-L-cysteine + ADP + phosphate + H(+). It participates in sulfur metabolism; glutathione biosynthesis; glutathione from L-cysteine and L-glutamate: step 1/2. This is Glutamate--cysteine ligase from Saccharophagus degradans (strain 2-40 / ATCC 43961 / DSM 17024).